Reading from the N-terminus, the 912-residue chain is Putative respiratory burst oxidase homolog protein J (912 aa).

Disordered regions lie at residues 1–51 (MKNN…GGGI) and 73–112 (WRKS…RTTS). Topologically, residues 1–323 (MKNNKKVGTE…VVVTAELMYE (323 aa)) are cytoplasmic. Polar residues-rich tracts occupy residues 29-44 (SVKQ…NPES) and 78-87 (NLGSPSTRKS). 2 EF-hand-like regions span residues 147-155 (AVDGRLPKD) and 181-193 (RQIK…DKEQ). An EF-hand domain is found at 205–240 (DLDCRLQIFFDMCDKDGDGKLTEEEVKEVIVLSASA). 5 residues coordinate Ca(2+): Asp-218, Asp-220, Asp-222, Lys-224, and Glu-229. Ser-294 is subject to Phosphoserine. Residues 324–344 (HWKKIWVVTLWLAVNVVLFMW) form a helical membrane-spanning segment. Residues 345-363 (KYEEFTTSPLYNITGRCLC) are Extracellular-facing. A helical membrane pass occupies residues 364 to 384 (AAKGTAEILKLNMALILVPVL). The 158-residue stretch at 366-523 (KGTAEILKLN…LLVIAYALLI (158 aa)) folds into the Ferric oxidoreductase domain. Residues 385–410 (RRTLTFLRSTFLNHLIPFDDNINFHK) are Cytoplasmic-facing. The helical transmembrane segment at 411–431 (LIAVAIAVISLLHTALHMLCN) threads the bilayer. At 432–458 (YPRLSSCPYNFYSDYAGNLLGAKQPTY) the chain is on the extracellular side. A helical transmembrane segment spans residues 459–479 (LGLMLTPVSVTGVLMIIFMGI). At 480–510 (SFTLAMHYFRRNIVKLPIPFNRLAGFNSFWY) the chain is on the cytoplasmic side. Residues 511-531 (AHHLLVIAYALLIIHGYILII) traverse the membrane as a helical segment. The Extracellular segment spans residues 532 to 697 (EKPWYQKTTW…PYGAPAQSYQ (166 aa)). Residues 562-695 (EHNHRVHIIK…KGPYGAPAQS (134 aa)) enclose the FAD-binding FR-type domain. A helical transmembrane segment spans residues 698–718 (KFDILLLIGLGIGATPFISIL). Topologically, residues 719-912 (KDMLNNLKPG…TRFTFHKENF (194 aa)) are cytoplasmic.

Belongs to the RBOH (TC 5.B.1.3) family. Monomer and homodimer.

Its subcellular location is the membrane. Calcium-dependent NADPH oxidase that generates superoxide. The chain is Putative respiratory burst oxidase homolog protein J (RBOHJ) from Arabidopsis thaliana (Mouse-ear cress).